A 152-amino-acid chain; its full sequence is Small ribosomal subunit protein uS19u (152 aa).

The protein belongs to the universal ribosomal protein uS19 family.

It localises to the cytoplasm. The polypeptide is Small ribosomal subunit protein uS19u (RPS15A) (Arabidopsis thaliana (Mouse-ear cress)).